A 157-amino-acid chain; its full sequence is UPF0262 protein RL0614 (157 aa).

This sequence belongs to the UPF0262 family.

The chain is UPF0262 protein RL0614 from Rhizobium johnstonii (strain DSM 114642 / LMG 32736 / 3841) (Rhizobium leguminosarum bv. viciae).